The following is a 341-amino-acid chain: tRNA N6-adenosine threonylcarbamoyltransferase (341 aa).

2 residues coordinate Fe cation: His111 and His115. Residues Leu134–Gly138, Asp167, Gly180, and Asn276 each bind substrate. Asp304 contacts Fe cation.

Belongs to the KAE1 / TsaD family. Requires Fe(2+) as cofactor.

The protein resides in the cytoplasm. It catalyses the reaction L-threonylcarbamoyladenylate + adenosine(37) in tRNA = N(6)-L-threonylcarbamoyladenosine(37) in tRNA + AMP + H(+). Functionally, required for the formation of a threonylcarbamoyl group on adenosine at position 37 (t(6)A37) in tRNAs that read codons beginning with adenine. Is involved in the transfer of the threonylcarbamoyl moiety of threonylcarbamoyl-AMP (TC-AMP) to the N6 group of A37, together with TsaE and TsaB. TsaD likely plays a direct catalytic role in this reaction. The sequence is that of tRNA N6-adenosine threonylcarbamoyltransferase from Pseudomonas paraeruginosa (strain DSM 24068 / PA7) (Pseudomonas aeruginosa (strain PA7)).